The sequence spans 121 residues: MARIAGINIPPQQHAEIGLTAIFGVGRTRARKICEAAGVPVTKKVKDLTDAELERIREHLGVFTVEGDLRREVQLSIKRLIDLGTYRGMRHKRGLPVRGQRTRTNARTRKGPRRAAASLKK.

A disordered region spans residues 91–121 (HKRGLPVRGQRTRTNARTRKGPRRAAASLKK).

This sequence belongs to the universal ribosomal protein uS13 family. Part of the 30S ribosomal subunit. Forms a loose heterodimer with protein S19. Forms two bridges to the 50S subunit in the 70S ribosome.

Located at the top of the head of the 30S subunit, it contacts several helices of the 16S rRNA. In the 70S ribosome it contacts the 23S rRNA (bridge B1a) and protein L5 of the 50S subunit (bridge B1b), connecting the 2 subunits; these bridges are implicated in subunit movement. Contacts the tRNAs in the A and P-sites. The sequence is that of Small ribosomal subunit protein uS13 from Bordetella avium (strain 197N).